We begin with the raw amino-acid sequence, 125 residues long: Large ribosomal subunit protein bL12 (125 aa).

This sequence belongs to the bacterial ribosomal protein bL12 family. In terms of assembly, homodimer. Part of the ribosomal stalk of the 50S ribosomal subunit. Forms a multimeric L10(L12)X complex, where L10 forms an elongated spine to which 2 to 4 L12 dimers bind in a sequential fashion. Binds GTP-bound translation factors.

In terms of biological role, forms part of the ribosomal stalk which helps the ribosome interact with GTP-bound translation factors. Is thus essential for accurate translation. In Helicobacter pylori (strain HPAG1), this protein is Large ribosomal subunit protein bL12.